The sequence spans 444 residues: E3 ubiquitin-protein ligase RNFT2 (444 aa).

The Extracellular portion of the chain corresponds to 1-181 (MWLFTVNQVL…ILLAKLCFQH (181 aa)). 2 disordered regions span residues 13-41 (MQRR…ASVD) and 92-149 (PASR…PGTP). A compositionally biased stretch (basic residues) spans 107-121 (YHHRQPHHHFHHGGH). Residues 131-140 (GGDHRGHSEE) are compositionally biased toward basic and acidic residues. Residues 182-202 (KLGIAVCIGMASTFAYANSTL) form a helical membrane-spanning segment. Residues 203–214 (REQVSLKEKRSV) are Cytoplasmic-facing. A helical transmembrane segment spans residues 215 to 235 (LVILWILAFLAGNTLYVLYTF). Residues 236–255 (SSQQLYNSLIFLKPNLEMLD) are Extracellular-facing. Residues 256 to 276 (FFDLLWIVGIADFVLKYITIA) traverse the membrane as a helical segment. Residues 277–329 (LKCLIVALPKIILAVKSKGKFYLVIEELSQLFRSLVPIQLWYKYIMGDDSSNS) lie on the Cytoplasmic side of the membrane. A helical membrane pass occupies residues 330-350 (YFLGGVLIVLYSLCKSFDICG). Over 351–444 (RVGGVRKALK…GATSAHFQVY (94 aa)) the chain is Extracellular. The RING-type zinc-finger motif lies at 384–422 (CAICQAEFREPLILLCQHVFCEECLCLWLDRERTCPLCR).

The protein localises to the membrane. Its function is as follows. E3 ubiquitin-protein ligase that negatively regulates IL3-dependent cellular responses through IL3RA ubiquitination and degradation by the proteasome, having an anti-inflammatory effect. The sequence is that of E3 ubiquitin-protein ligase RNFT2 from Homo sapiens (Human).